The following is an 82-amino-acid chain: Small ribosomal subunit protein eS21 (82 aa).

It belongs to the eukaryotic ribosomal protein eS21 family.

The polypeptide is Small ribosomal subunit protein eS21 (RPS21) (Oryza sativa subsp. japonica (Rice)).